A 463-amino-acid polypeptide reads, in one-letter code: Probable glycosyltransferase 3 (463 aa).

Residues 1-20 (MAVTGGGRPAARQQAARGKQ) are disordered. At 1-24 (MAVTGGGRPAARQQAARGKQMQRT) the chain is on the cytoplasmic side. The segment covering 9–20 (PAARQQAARGKQ) has biased composition (low complexity). A helical; Signal-anchor for type II membrane protein transmembrane segment spans residues 25 to 47 (FNNVKITLICGFITLLVLRGTVG). The Lumenal segment spans residues 48 to 463 (INLLTYGVGG…ALKMDAKIES (416 aa)). The disordered stretch occupies residues 82–125 (EIRSDTDDDDDDEEEEPLGVDASTTTTTNSTTTTATAARRRSSN). Acidic residues predominate over residues 87-99 (TDDDDDDEEEEPL). The segment covering 103 to 118 (ASTTTTTNSTTTTATA) has biased composition (low complexity). Residues Asn-110, Asn-125, and Asn-442 are each glycosylated (N-linked (GlcNAc...) asparagine).

This sequence belongs to the glycosyltransferase 34 family.

Its subcellular location is the golgi apparatus membrane. Its function is as follows. Probable glycosyltransferase that may be involved in the biosynthesis of xyloglucan. The sequence is that of Probable glycosyltransferase 3 from Oryza sativa subsp. indica (Rice).